Here is a 327-residue protein sequence, read N- to C-terminus: tRNA U34 carboxymethyltransferase (327 aa).

Carboxy-S-adenosyl-L-methionine-binding positions include Lys-91, Trp-105, Lys-110, Gly-130, 181–182 (IE), Met-196, Tyr-200, and Arg-315.

Belongs to the class I-like SAM-binding methyltransferase superfamily. CmoB family. Homotetramer.

It catalyses the reaction carboxy-S-adenosyl-L-methionine + 5-hydroxyuridine(34) in tRNA = 5-carboxymethoxyuridine(34) in tRNA + S-adenosyl-L-homocysteine + H(+). Its function is as follows. Catalyzes carboxymethyl transfer from carboxy-S-adenosyl-L-methionine (Cx-SAM) to 5-hydroxyuridine (ho5U) to form 5-carboxymethoxyuridine (cmo5U) at position 34 in tRNAs. This Pectobacterium atrosepticum (strain SCRI 1043 / ATCC BAA-672) (Erwinia carotovora subsp. atroseptica) protein is tRNA U34 carboxymethyltransferase.